The sequence spans 162 residues: RNA pyrophosphohydrolase (162 aa).

A Nudix hydrolase domain is found at 7 to 149 (EYRPCVGIML…KKEVYKKVIE (143 aa)). Positions 40–61 (GGVDEGEELEQAALRELLEEVG) match the Nudix box motif.

It belongs to the Nudix hydrolase family. RppH subfamily. Requires a divalent metal cation as cofactor.

Functionally, accelerates the degradation of transcripts by removing pyrophosphate from the 5'-end of triphosphorylated RNA, leading to a more labile monophosphorylated state that can stimulate subsequent ribonuclease cleavage. The sequence is that of RNA pyrophosphohydrolase from Wolbachia pipientis subsp. Culex pipiens (strain wPip).